A 382-amino-acid chain; its full sequence is Chaperone protein DnaJ (382 aa).

The J domain occupies aspartate 5–glycine 70. A CR-type zinc finger spans residues glycine 141–glutamate 219. Zn(2+) is bound by residues cysteine 154, cysteine 157, cysteine 171, cysteine 174, cysteine 193, cysteine 196, cysteine 207, and cysteine 210. 4 CXXCXGXG motif repeats span residues cysteine 154–glycine 161, cysteine 171–glycine 178, cysteine 193–glycine 200, and cysteine 207–glycine 214.

It belongs to the DnaJ family. As to quaternary structure, homodimer. Zn(2+) serves as cofactor.

The protein resides in the cytoplasm. Participates actively in the response to hyperosmotic and heat shock by preventing the aggregation of stress-denatured proteins and by disaggregating proteins, also in an autonomous, DnaK-independent fashion. Unfolded proteins bind initially to DnaJ; upon interaction with the DnaJ-bound protein, DnaK hydrolyzes its bound ATP, resulting in the formation of a stable complex. GrpE releases ADP from DnaK; ATP binding to DnaK triggers the release of the substrate protein, thus completing the reaction cycle. Several rounds of ATP-dependent interactions between DnaJ, DnaK and GrpE are required for fully efficient folding. Also involved, together with DnaK and GrpE, in the DNA replication of plasmids through activation of initiation proteins. This Cereibacter sphaeroides (strain ATCC 17029 / ATH 2.4.9) (Rhodobacter sphaeroides) protein is Chaperone protein DnaJ.